The primary structure comprises 433 residues: GTPase Obg (433 aa).

In terms of domain architecture, Obg spans 1–159 (MKFVDSADLI…FEIRAELKVL (159 aa)). Positions 160–332 (ADVGFVGLPN…LLFMIYEELK (173 aa)) constitute an OBG-type G domain. GTP is bound by residues 166-173 (GLPNAGKS), 191-195 (FTTIN), 213-216 (DLPG), 284-287 (NKMD), and 313-315 (SGL). Residues S173 and T193 each contribute to the Mg(2+) site. The OCT domain maps to 355-433 (KFEEQKEDIQ…VFDYELEWTD (79 aa)).

It belongs to the TRAFAC class OBG-HflX-like GTPase superfamily. OBG GTPase family. As to quaternary structure, monomer. Requires Mg(2+) as cofactor.

The protein resides in the cytoplasm. In terms of biological role, an essential GTPase which binds GTP, GDP and possibly (p)ppGpp with moderate affinity, with high nucleotide exchange rates and a fairly low GTP hydrolysis rate. Plays a role in control of the cell cycle, stress response, ribosome biogenesis and in those bacteria that undergo differentiation, in morphogenesis control. The polypeptide is GTPase Obg (Mycoplasma capricolum subsp. capricolum (strain California kid / ATCC 27343 / NCTC 10154)).